The primary structure comprises 175 residues: Co-chaperone protein HscB homolog (175 aa).

The 75-residue stretch at 2 to 76 folds into the J domain; the sequence is NYFALFNLTP…RAEHMLELRG (75 aa).

The protein belongs to the HscB family. In terms of assembly, interacts with HscA and stimulates its ATPase activity.

Functionally, co-chaperone involved in the maturation of iron-sulfur cluster-containing proteins. Seems to help targeting proteins to be folded toward HscA. This chain is Co-chaperone protein HscB homolog, found in Pseudoalteromonas atlantica (strain T6c / ATCC BAA-1087).